Reading from the N-terminus, the 103-residue chain is Cell division topological specificity factor (103 aa).

It belongs to the MinE family.

In terms of biological role, prevents the cell division inhibition by proteins MinC and MinD at internal division sites while permitting inhibition at polar sites. This ensures cell division at the proper site by restricting the formation of a division septum at the midpoint of the long axis of the cell. This chain is Cell division topological specificity factor, found in Prochlorococcus marinus (strain MIT 9211).